A 513-amino-acid polypeptide reads, in one-letter code: 2-isopropylmalate synthase (513 aa).

The Pyruvate carboxyltransferase domain occupies 4–268; it reads IKIFDTTLRD…ETGIKTELIY (265 aa). 4 residues coordinate Mn(2+): Asp13, His203, His205, and Asn239. The tract at residues 392 to 513 is regulatory domain; the sequence is KLVHFHVHTG…GLLRKNGGAE (122 aa).

Belongs to the alpha-IPM synthase/homocitrate synthase family. LeuA type 1 subfamily. In terms of assembly, homodimer. Requires Mn(2+) as cofactor.

Its subcellular location is the cytoplasm. The catalysed reaction is 3-methyl-2-oxobutanoate + acetyl-CoA + H2O = (2S)-2-isopropylmalate + CoA + H(+). The protein operates within amino-acid biosynthesis; L-leucine biosynthesis; L-leucine from 3-methyl-2-oxobutanoate: step 1/4. Its function is as follows. Catalyzes the condensation of the acetyl group of acetyl-CoA with 3-methyl-2-oxobutanoate (2-ketoisovalerate) to form 3-carboxy-3-hydroxy-4-methylpentanoate (2-isopropylmalate). This Thermotoga maritima (strain ATCC 43589 / DSM 3109 / JCM 10099 / NBRC 100826 / MSB8) protein is 2-isopropylmalate synthase.